We begin with the raw amino-acid sequence, 339 residues long: Dihydroorotate dehydrogenase (quinone) (339 aa).

Residues 62 to 66 (AGMDK) and threonine 86 contribute to the FMN site. Residue lysine 66 participates in substrate binding. 111–115 (NRMGF) is a binding site for substrate. Residues asparagine 139 and asparagine 172 each coordinate FMN. Asparagine 172 is a binding site for substrate. Catalysis depends on serine 175, which acts as the Nucleophile. Asparagine 177 is a binding site for substrate. FMN-binding residues include lysine 217 and threonine 245. 246-247 (NT) provides a ligand contact to substrate. FMN is bound by residues glycine 268, glycine 297, and 318 to 319 (FS).

Belongs to the dihydroorotate dehydrogenase family. Type 2 subfamily. As to quaternary structure, monomer. It depends on FMN as a cofactor.

The protein resides in the cell membrane. The catalysed reaction is (S)-dihydroorotate + a quinone = orotate + a quinol. It participates in pyrimidine metabolism; UMP biosynthesis via de novo pathway; orotate from (S)-dihydroorotate (quinone route): step 1/1. Functionally, catalyzes the conversion of dihydroorotate to orotate with quinone as electron acceptor. In Shewanella halifaxensis (strain HAW-EB4), this protein is Dihydroorotate dehydrogenase (quinone).